Here is a 177-residue protein sequence, read N- to C-terminus: MSRIAKAPVDVVSGVEVSISGQEVTVKGSKGTLTRVFNDAVEVAQEENQLKALPREGFADSWAQAGTVRSILNAMVQGVSQGFEKKLTLLGVGYRAQAQGSKLNLTLGFSHPVVYEMPEGITVETPSQTEIVVKGADKQVVGQVAANIRGYRPPEPYKGKGVRYADENVRRKEAKKK.

The protein belongs to the universal ribosomal protein uL6 family. As to quaternary structure, part of the 50S ribosomal subunit.

Functionally, this protein binds to the 23S rRNA, and is important in its secondary structure. It is located near the subunit interface in the base of the L7/L12 stalk, and near the tRNA binding site of the peptidyltransferase center. In Alteromonas mediterranea (strain DSM 17117 / CIP 110805 / LMG 28347 / Deep ecotype), this protein is Large ribosomal subunit protein uL6.